The following is a 434-amino-acid chain: MNKNKISIVILAAGKGSRMKSSKAKVLHPICGKEMLYYIIKTSRAISDDVSVVVAHQRDAVVESMSRYFNDINFVTQDAINFPGTGGAMKGVNIKNERVLVLNGDMPLVEKSSLDGFLEAQGDVVMSIFNLQNPSGYGRVIIEDAEVKKIVEQKDATLQELKVQSVNAGIYAFSKKIIEKYIPLLQNNNAQEEYYLTDIISMARNDGIKITPLLVNENEYKGVNSKKDLSDAEIIMQDKIKNSLMESGVTMQLPSTIYIEEGVVFEGECIVENGCRITGESKIINSHIKAHSVIEDSIVKNSDVGPLAHLRPASNIEDTHIGNFVEIKKSTLKGVKAGHLSYIGDATVDEGTNIGAGVITCNYDGINKYKTVIGKNVFIGSDSQLIAPVVIEDNVMIAAGTTLRSGKVNSGELVVSASKSRIIKDFYYKFFAKK.

A pyrophosphorylase region spans residues 1-226; sequence MNKNKISIVI…ENEYKGVNSK (226 aa). Residues 11–14, Lys-25, Gln-77, and 84–85 each bind UDP-N-acetyl-alpha-D-glucosamine; these read LAAG and GT. Mg(2+) is bound at residue Asp-105. Positions 138, 152, 167, and 224 each coordinate UDP-N-acetyl-alpha-D-glucosamine. A Mg(2+)-binding site is contributed by Asn-224. The linker stretch occupies residues 227–247; it reads KDLSDAEIIMQDKIKNSLMES. The segment at 248 to 434 is N-acetyltransferase; that stretch reads GVTMQLPSTI…DFYYKFFAKK (187 aa). Residues Arg-311 and Lys-328 each coordinate UDP-N-acetyl-alpha-D-glucosamine. His-339 (proton acceptor) is an active-site residue. Residues Tyr-342 and Asn-353 each coordinate UDP-N-acetyl-alpha-D-glucosamine. Acetyl-CoA is bound by residues Ala-356, 362-363, Ser-381, and Ala-399; that span reads NY.

It in the N-terminal section; belongs to the N-acetylglucosamine-1-phosphate uridyltransferase family. The protein in the C-terminal section; belongs to the transferase hexapeptide repeat family. Homotrimer. Requires Mg(2+) as cofactor.

It is found in the cytoplasm. It catalyses the reaction alpha-D-glucosamine 1-phosphate + acetyl-CoA = N-acetyl-alpha-D-glucosamine 1-phosphate + CoA + H(+). The catalysed reaction is N-acetyl-alpha-D-glucosamine 1-phosphate + UTP + H(+) = UDP-N-acetyl-alpha-D-glucosamine + diphosphate. Its pathway is nucleotide-sugar biosynthesis; UDP-N-acetyl-alpha-D-glucosamine biosynthesis; N-acetyl-alpha-D-glucosamine 1-phosphate from alpha-D-glucosamine 6-phosphate (route II): step 2/2. It participates in nucleotide-sugar biosynthesis; UDP-N-acetyl-alpha-D-glucosamine biosynthesis; UDP-N-acetyl-alpha-D-glucosamine from N-acetyl-alpha-D-glucosamine 1-phosphate: step 1/1. The protein operates within bacterial outer membrane biogenesis; LPS lipid A biosynthesis. Its function is as follows. Catalyzes the last two sequential reactions in the de novo biosynthetic pathway for UDP-N-acetylglucosamine (UDP-GlcNAc). The C-terminal domain catalyzes the transfer of acetyl group from acetyl coenzyme A to glucosamine-1-phosphate (GlcN-1-P) to produce N-acetylglucosamine-1-phosphate (GlcNAc-1-P), which is converted into UDP-GlcNAc by the transfer of uridine 5-monophosphate (from uridine 5-triphosphate), a reaction catalyzed by the N-terminal domain. This chain is Bifunctional protein GlmU, found in Sulfurimonas denitrificans (strain ATCC 33889 / DSM 1251) (Thiomicrospira denitrificans (strain ATCC 33889 / DSM 1251)).